Here is a 1003-residue protein sequence, read N- to C-terminus: Rho-associated protein kinase 1 (1003 aa).

The tract at residues 1-28 is disordered; the sequence is VAPVVPDLSSDIDTSNFDDLEEDKGEEE. The 58-residue stretch at 1–58 folds into the AGC-kinase C-terminal domain; the sequence is VAPVVPDLSSDIDTSNFDDLEEDKGEEETFPIPKAFVGNQLPFVGFTYYSNRRYLSSA. The span at 16–28 shows a compositional bias: acidic residues; the sequence is NFDDLEEDKGEEE. Positions 17–376 are interaction with FHOD1; sequence FDDLEEDKGE…KKLKEEREAR (360 aa). A coiled-coil region spans residues 71 to 341; it reads KSLQESLQKT…RLEQEVNEHK (271 aa). An REM-1 domain is found at 128–205; it reads STVSQIEKEK…LEEANDLLRT (78 aa). K296 bears the N6-acetyllysine mark. The SHROOM3 binding stretch occupies residues 356–595; that stretch reads EAKSVAMCEM…TVSRLEEANS (240 aa). Positions 598 to 664 constitute a RhoBD domain; sequence TKDIEILRRE…LAEIMNRKDF (67 aa). Residues 647–659 are RHOA binding; it reads LKTQAVNKLAEIM. Residues 660-751 are a coiled coil; it reads NRKDFKIDRK…KLLDLSDSTS (92 aa). Residues S754 and S757 each carry the phosphoserine modification. Residues 764-1003 form an auto-inhibitory region; it reads NLPESRIEGW…VVKNTSGKTR (240 aa). One can recognise a PH domain in the interval 767–966; it reads ESRIEGWLSV…WVTHLVKKIP (200 aa). A Phorbol-ester/DAG-type zinc finger spans residues 877 to 930; it reads GHEFIPTLYHFPANCDACAKPLWHVFKPPPALECRRCHVKCHRDHLDKKEDLIC. The interval 968-1003 is disordered; the sequence is NPPSGFVRASPRTLSTRSTANQSFRKVVKNTSGKTR. Position 977 is a phosphoserine (S977). Polar residues predominate over residues 979 to 1003; it reads RTLSTRSTANQSFRKVVKNTSGKTR.

Belongs to the protein kinase superfamily. AGC Ser/Thr protein kinase family. As to quaternary structure, homodimer. Interacts with RHOA (activated by GTP), RHOB, RHOC, GEM, MYLC2B, RHOE, PPP1R12A, LIMK1, LIMK2, TSG101, CHORDC1, DAPK3, PFN1, PTEN and JIP3. Interacts with ITGB1BP1 (via N-terminus and PTB domain). Interacts with FHOD1 in a Src-dependent manner. Interacts with SHROOM3. Mg(2+) is required as a cofactor. In terms of processing, autophosphorylated on serine and threonine residues. Post-translationally, cleaved by caspase-3 during apoptosis. This leads to constitutive activation of the kinase and membrane blebbing.

The protein localises to the cytoplasm. It localises to the cytoskeleton. The protein resides in the microtubule organizing center. Its subcellular location is the centrosome. It is found in the centriole. The protein localises to the golgi apparatus membrane. It localises to the cell projection. The protein resides in the bleb. Its subcellular location is the cell membrane. It is found in the lamellipodium. The protein localises to the ruffle. The catalysed reaction is L-seryl-[protein] + ATP = O-phospho-L-seryl-[protein] + ADP + H(+). It catalyses the reaction L-threonyl-[protein] + ATP = O-phospho-L-threonyl-[protein] + ADP + H(+). Its activity is regulated as follows. Activated by RHOA binding. Inhibited by Y-27632. Functionally, protein kinase which is a key regulator of actin cytoskeleton and cell polarity. Involved in regulation of smooth muscle contraction, actin cytoskeleton organization, stress fiber and focal adhesion formation, neurite retraction, cell adhesion and motility via phosphorylation of DAPK3, GFAP, LIMK1, LIMK2, MYL9/MLC2, TPPP, PFN1 and PPP1R12A. Phosphorylates FHOD1 and acts synergistically with it to promote SRC-dependent non-apoptotic plasma membrane blebbing. Phosphorylates JIP3 and regulates the recruitment of JNK to JIP3 upon UVB-induced stress. Acts as a suppressor of inflammatory cell migration by regulating PTEN phosphorylation and stability. Acts as a negative regulator of VEGF-induced angiogenic endothelial cell activation. Required for centrosome positioning and centrosome-dependent exit from mitosis. Plays a role in terminal erythroid differentiation. May regulate closure of the eyelids and ventral body wall by inducing the assembly of actomyosin bundles. Promotes keratinocyte terminal differentiation. Involved in osteoblast compaction through the fibronectin fibrillogenesis cell-mediated matrix assembly process, essential for osteoblast mineralization. In Pan troglodytes (Chimpanzee), this protein is Rho-associated protein kinase 1 (ROCK1).